Consider the following 59-residue polypeptide: Large ribosomal subunit protein bL32 (59 aa).

Residues 1–40 (MAVQQNKKSPSKRGMHRSHDFLRTTPLSVDPGTGEVHLRH) form a disordered region.

The protein belongs to the bacterial ribosomal protein bL32 family.

The chain is Large ribosomal subunit protein bL32 from Nitrosospira multiformis (strain ATCC 25196 / NCIMB 11849 / C 71).